We begin with the raw amino-acid sequence, 129 residues long: MTNFKDIIKKIEYKFSKHQLPDIKVGDLIRLGISIQESGKQRVQPFEGTVIALHKAGLNTTITVRKILQGIGVERVFPIHASCLTSIQVLRRSQVSRAKLYYLRNRTGKATRLKEKFEKLPPIWVNKLP.

Belongs to the bacterial ribosomal protein bL19 family.

The protein resides in the plastid. In Prototheca wickerhamii, this protein is Large ribosomal subunit protein bL19c.